Consider the following 371-residue polypeptide: 4-hydroxy-3-methylbut-2-en-1-yl diphosphate synthase (flavodoxin) (371 aa).

[4Fe-4S] cluster is bound by residues cysteine 272, cysteine 275, cysteine 307, and glutamate 314.

It belongs to the IspG family. It depends on [4Fe-4S] cluster as a cofactor.

The enzyme catalyses (2E)-4-hydroxy-3-methylbut-2-enyl diphosphate + oxidized [flavodoxin] + H2O + 2 H(+) = 2-C-methyl-D-erythritol 2,4-cyclic diphosphate + reduced [flavodoxin]. Its pathway is isoprenoid biosynthesis; isopentenyl diphosphate biosynthesis via DXP pathway; isopentenyl diphosphate from 1-deoxy-D-xylulose 5-phosphate: step 5/6. Its function is as follows. Converts 2C-methyl-D-erythritol 2,4-cyclodiphosphate (ME-2,4cPP) into 1-hydroxy-2-methyl-2-(E)-butenyl 4-diphosphate. This chain is 4-hydroxy-3-methylbut-2-en-1-yl diphosphate synthase (flavodoxin), found in Pseudomonas paraeruginosa (strain DSM 24068 / PA7) (Pseudomonas aeruginosa (strain PA7)).